A 67-amino-acid chain; its full sequence is Probable archaeal histone 3 (67 aa).

Interaction with DNA stretches follow at residues R20–S22 and K54–K57.

The protein belongs to the archaeal histone HMF family. In terms of assembly, homodimer or heterodimer with another histone. Dimers then assemble into higher oligomers, with the DNA wrapped around the protein core.

The protein resides in the cytoplasm. It localises to the chromosome. Its function is as follows. Binds and compact DNA (95 to 150 base pairs) to form nucleosome-like structures that contain positive DNA supercoils. Increases the resistance of DNA to thermal denaturation (in vitro). The chain is Probable archaeal histone 3 from Methanocaldococcus jannaschii (strain ATCC 43067 / DSM 2661 / JAL-1 / JCM 10045 / NBRC 100440) (Methanococcus jannaschii).